Consider the following 356-residue polypeptide: Alanine racemase (356 aa).

Catalysis depends on Lys35, which acts as the Proton acceptor; specific for D-alanine. An N6-(pyridoxal phosphate)lysine modification is found at Lys35. Arg130 is a substrate binding site. Tyr253 acts as the Proton acceptor; specific for L-alanine in catalysis. Met301 is a binding site for substrate.

The protein belongs to the alanine racemase family. Pyridoxal 5'-phosphate is required as a cofactor.

It catalyses the reaction L-alanine = D-alanine. The protein operates within amino-acid biosynthesis; D-alanine biosynthesis; D-alanine from L-alanine: step 1/1. Functionally, catalyzes the interconversion of L-alanine and D-alanine. May also act on other amino acids. The sequence is that of Alanine racemase (alr) from Burkholderia mallei (strain NCTC 10229).